A 145-amino-acid polypeptide reads, in one-letter code: Cell division protein SepF (145 aa).

The protein belongs to the SepF family. Homodimer. Interacts with FtsZ.

Its subcellular location is the cytoplasm. Functionally, cell division protein that is part of the divisome complex and is recruited early to the Z-ring. Probably stimulates Z-ring formation, perhaps through the cross-linking of FtsZ protofilaments. Its function overlaps with FtsA. The sequence is that of Cell division protein SepF from Lactobacillus acidophilus (strain ATCC 700396 / NCK56 / N2 / NCFM).